Consider the following 37-residue polypeptide: Cytochrome b6-f complex subunit 5 (37 aa).

A helical transmembrane segment spans residues 5-25; that stretch reads LLSGIVLGLIPITLAGLFVTA.

Belongs to the PetG family. The 4 large subunits of the cytochrome b6-f complex are cytochrome b6, subunit IV (17 kDa polypeptide, PetD), cytochrome f and the Rieske protein, while the 4 small subunits are PetG, PetL, PetM and PetN. The complex functions as a dimer.

The protein resides in the plastid. Its subcellular location is the chloroplast thylakoid membrane. Its function is as follows. Component of the cytochrome b6-f complex, which mediates electron transfer between photosystem II (PSII) and photosystem I (PSI), cyclic electron flow around PSI, and state transitions. PetG is required for either the stability or assembly of the cytochrome b6-f complex. The chain is Cytochrome b6-f complex subunit 5 from Angiopteris evecta (Mule's foot fern).